The following is a 574-amino-acid chain: MRAFQRYGLEHIVLCPGSRSAPLALAVGALIEESGINAYTAIDERSAAFMAIGISAASGKATIVITTSGTAVSNLLPAAVEADRSCLPIIFITADRPLRLKGCGSNQTVNQEDFLVPVCREVFNCPSIGLHEISGRSFFTLVKKTWEKAHAYPGPVHLNIPIEEPLHASFLEQKEVCNGWKPLNFEEIQLPISTVSTNTRIKTKEVPELDPSQPGIILAGPWRGKPSQLLGFRKAVKEFQSFTGWPLFADCLSAITIKQSGLISFWELLISAQIFESNDKLQVLRLGPLSCSRALESFLRNTNKKQVLITEGEERYLDPLHLAKQYSGGLQSWLKIFKSNYPNLNNNLVNDDTNILEDLLNKNQLVGDLVDKYLKEDSKITEPSIARKLLDLIPEDIPIMLSASSPVRDFLAYSGFSPFKRRLYSFRGASGIDGNLSLAIGLSIFLGPLVVVCGDLAFLHDSNALLLNQPKKYPLIILLIDNNGGGIFKQLSLAPIFKGSVDKLFSMPQSINIGDLAKAHNIPFRTISSFDELNSALEWSLKLSGPVIIRACTNSEEDTLLRKNITDGLKKYIN.

Belongs to the TPP enzyme family. MenD subfamily. Homodimer. Mg(2+) is required as a cofactor. Mn(2+) serves as cofactor. Requires thiamine diphosphate as cofactor.

It catalyses the reaction isochorismate + 2-oxoglutarate + H(+) = 5-enolpyruvoyl-6-hydroxy-2-succinyl-cyclohex-3-ene-1-carboxylate + CO2. It functions in the pathway quinol/quinone metabolism; 1,4-dihydroxy-2-naphthoate biosynthesis; 1,4-dihydroxy-2-naphthoate from chorismate: step 2/7. The protein operates within cofactor biosynthesis; phylloquinone biosynthesis. Catalyzes the thiamine diphosphate-dependent decarboxylation of 2-oxoglutarate and the subsequent addition of the resulting succinic semialdehyde-thiamine pyrophosphate anion to isochorismate to yield 2-succinyl-5-enolpyruvyl-6-hydroxy-3-cyclohexene-1-carboxylate (SEPHCHC). The polypeptide is 2-succinyl-5-enolpyruvyl-6-hydroxy-3-cyclohexene-1-carboxylate synthase (Prochlorococcus marinus (strain SARG / CCMP1375 / SS120)).